The following is a 137-amino-acid chain: Small ribosomal subunit protein uS12 (137 aa).

Disordered regions lie at residues 1-21 (MPTI…KSDS) and 33-57 (KVQT…TPKK).

The protein belongs to the universal ribosomal protein uS12 family. As to quaternary structure, part of the 30S ribosomal subunit. Contacts proteins S8 and S17. May interact with IF1 in the 30S initiation complex.

Functionally, with S4 and S5 plays an important role in translational accuracy. Interacts with and stabilizes bases of the 16S rRNA that are involved in tRNA selection in the A site and with the mRNA backbone. Located at the interface of the 30S and 50S subunits, it traverses the body of the 30S subunit contacting proteins on the other side and probably holding the rRNA structure together. The combined cluster of proteins S8, S12 and S17 appears to hold together the shoulder and platform of the 30S subunit. This Streptococcus pyogenes serotype M1 protein is Small ribosomal subunit protein uS12.